Here is a 425-residue protein sequence, read N- to C-terminus: Histone-binding protein RBBP7 (425 aa).

The residue at position 2 (Ala2) is an N-acetylalanine. Ser3 carries the phosphoserine modification. N6-acetyllysine; alternate is present on Lys4. A Glycyl lysine isopeptide (Lys-Gly) (interchain with G-Cter in SUMO2); alternate cross-link involves residue Lys4. A Glycyl lysine isopeptide (Lys-Gly) (interchain with G-Cter in ubiquitin); alternate cross-link involves residue Lys4. Thr10 carries the post-translational modification Phosphothreonine. Glu13 and Ser95 each carry phosphoserine. WD repeat units lie at residues 47-122, 128-173, 181-217, 228-269, 275-312, 318-369, and 376-403; these read QWLP…KINH, RARY…LRLR, GLSWNSNLSGHLLSASDDHTVCLWDINAGPKEGKIVD, VVED…HLVD, VNCLSFNPYSEFILATGSADKTVALWDLRNLKLKLHTF, EIFQ…LFIH, and ISDFSWNPNEPWVICSVSEDNIMQIWQM. Residue Lys101 forms a Glycyl lysine isopeptide (Lys-Gly) (interchain with G-Cter in SUMO2) linkage. At Lys119 the chain carries N6-acetyllysine. Residue Lys155 forms a Glycyl lysine isopeptide (Lys-Gly) (interchain with G-Cter in SUMO2) linkage. Lys159 carries the N6-acetyllysine; alternate modification. Residue Lys159 forms a Glycyl lysine isopeptide (Lys-Gly) (interchain with G-Cter in SUMO2); alternate linkage. Ser354 is subject to Phosphoserine.

Belongs to the WD repeat RBAP46/RBAP48/MSI1 family. As to quaternary structure, binds directly to helix 1 of the histone fold of histone H4, a region that is not accessible when H4 is in chromatin. Subunit of the type B histone acetyltransferase (HAT) complex, composed of RBBP7 and HAT1. Subunit of the core histone deacetylase (HDAC) complex, which is composed of HDAC1, HDAC2, RBBP4 and RBBP7. The core HDAC complex associates with SIN3A, ARID4B/SAP180, SAP18, SAP30, SAP130, SUDS3/SAP45 and possibly ARID4A/RBP1 and ING1 to form the SIN3 HDAC complex. Component of the nucleosome remodeling and deacetylase (NuRD) repressor complex, composed of core proteins MTA1, MTA2, MTA3, RBBP4, RBBP7, HDAC1, HDAC2, MBD2, MBD3, and peripherally associated proteins CDK2AP1, CDK2AP2, GATAD2A, GATAD2B, CHD3, CHD4 and CHD5. The exact stoichiometry of the NuRD complex is unknown, and some subunits such as MBD2 and MBD3, GATAD2A and GATAD2B, and CHD3, CHD4 and CHD5 define mutually exclusive NuRD complexes. The NuRD complex may interact with MBD3L1. The NuRD complex may interact with MBD3L2. Subunit of the PRC2/EED-EZH2 complex, which is composed of at least EED, EZH2, RBBP4, RBBP7 and SUZ12. The PRC2/EED-EZH2 complex may also associate with HDAC1. Component of the NURF-1 ISWI chromatin remodeling complex (also called the nucleosome-remodeling factor (NURF) complex) at least composed of SMARCA1 (isoform 2), BPTF, RBBP4 and RBBP7. Within the complex interacts with isoform 2 of SMARCA1. Component of the BPFT-SMARCA1 complex at least composed of SMARCA1 (isoform 1), BPFT, RBBP4 and RBBP7; the complex is catalytically inactive and does not remodel chromatin. Within the complex interacts with isoform 1 of SMARCA1. Interacts with BRCA1. Interacts with CDK2AP1. Interacts with CENPA. Interacts with CHD3. Interacts with CHD4. Interacts with CREBBP, and this interaction may be enhanced by the binding of phosphorylated CREB1 to CREBBP. Interacts with HDAC7. Interacts with MTA1. Interacts with PWWP2B. Interacts with RB1 (via viral protein-binding domain). Interacts with SUV39H1.

Its subcellular location is the nucleus. Core histone-binding subunit that may target chromatin remodeling factors, histone acetyltransferases and histone deacetylases to their histone substrates in a manner that is regulated by nucleosomal DNA. Component of several complexes which regulate chromatin metabolism. These include the type B histone acetyltransferase (HAT) complex, which is required for chromatin assembly following DNA replication; the core histone deacetylase (HDAC) complex, which promotes histone deacetylation and consequent transcriptional repression; the nucleosome remodeling and histone deacetylase complex (the NuRD complex), which promotes transcriptional repression by histone deacetylation and nucleosome remodeling; and the PRC2/EED-EZH2 complex, which promotes repression of homeotic genes during development; and the NURF (nucleosome remodeling factor) complex. The protein is Histone-binding protein RBBP7 (RBBP7) of Homo sapiens (Human).